Reading from the N-terminus, the 273-residue chain is MTVLHSIDFFSSSSAPVAIEARAPQSAFPEHHHDFYEIVIVEEGAGVHVFNGNPYTLSRGCVCFVRDHDRHLFESTDDLFLTNVLFRAPDAFRFLSGVGHFLPRECDGVYPSHWRVNGQVLQQIKCLIACLEHAPKSDQVEDIALHESVFMQLLVKLWQGCQTQVGDDQEGRLYQLLDWLQNNYSEAVEWPELADRFALPLRTLHRQLKNKTGMTPQRYLTRLRLLQARHQLCYSDNSVTDIAYLCGFGDSNHFSTLFKREFSQSPRDLRSQL.

The 99-residue stretch at 174-272 (YQLLDWLQNN…SQSPRDLRSQ (99 aa)) folds into the HTH araC/xylS-type domain. 2 DNA-binding regions (H-T-H motif) span residues 191 to 212 (PELADRFALPLRTLHRQLKNKT) and 239 to 262 (VTDIAYLCGFGDSNHFSTLFKREF).

As to quaternary structure, binds DNA as a dimer.

It localises to the cytoplasm. Its function is as follows. Activates expression of the rhaBAD and rhaT operons. The protein is HTH-type transcriptional activator RhaS of Yersinia pestis bv. Antiqua (strain Angola).